We begin with the raw amino-acid sequence, 232 residues long: Proteasome subunit alpha type-2 (232 aa).

Belongs to the peptidase T1A family. The 26S proteasome consists of a 20S proteasome core and two 19S regulatory subunits. The 20S proteasome core is composed of 28 subunits that are arranged in four stacked rings, resulting in a barrel-shaped structure. The two end rings are each formed by seven alpha subunits, and the two central rings are each formed by seven beta subunits. The catalytic chamber with the active sites is on the inside of the barrel.

The protein resides in the cytoplasm. It is found in the nucleus. In terms of biological role, the proteasome is a multicatalytic proteinase complex which is characterized by its ability to cleave peptides with Arg, Phe, Tyr, Leu, and Glu adjacent to the leaving group at neutral or slightly basic pH. The proteasome has an ATP-dependent proteolytic activity. In Dictyostelium discoideum (Social amoeba), this protein is Proteasome subunit alpha type-2 (psmA2).